The primary structure comprises 218 residues: DNA-directed RNA polymerase III subunit RPC7-like (218 aa).

The disordered stretch occupies residues Thr130–Tyr218. Basic and acidic residues predominate over residues Lys139 to Glu160. Acidic residues-rich tracts occupy residues Val161–Asp193 and Asn201–Tyr218.

This sequence belongs to the eukaryotic RPC7 RNA polymerase subunit family. As to quaternary structure, component of the RNA polymerase III (Pol III) complex consisting of 17 subunits. Pol III exists as two alternative complexes defined by the mutually exclusive incorporation of subunit POLR3G/RPC7alpha or POLR3GL/RPC7beta. Found in a trimeric complex with POLR3C/RPC3 and POLR3F/RPC6. Directly interacts with POLR3C.

The protein resides in the nucleus. Its function is as follows. DNA-dependent RNA polymerase catalyzes the transcription of DNA into RNA using the four ribonucleoside triphosphates as substrates. Specific peripheric component of RNA polymerase III which synthesizes small RNAs, such as 5S rRNA and tRNAs. This Bos taurus (Bovine) protein is DNA-directed RNA polymerase III subunit RPC7-like (POLR3GL).